Reading from the N-terminus, the 239-residue chain is Fatty acid metabolism regulator protein (239 aa).

The 69-residue stretch at 6-74 folds into the HTH gntR-type domain; it reads QSPAGFAEEY…HGKPTKVNNF (69 aa). Residues 34–53 constitute a DNA-binding region (H-T-H motif); it reads ERELSELIGVTRTTLREVLQ.

As to quaternary structure, homodimer.

The protein localises to the cytoplasm. In terms of biological role, multifunctional regulator of fatty acid metabolism. The polypeptide is Fatty acid metabolism regulator protein (Salmonella paratyphi C (strain RKS4594)).